The sequence spans 108 residues: uncharacterized protein (108 aa).

The signal sequence occupies residues 1–24; that stretch reads MNLWEFRFGKSFLFIPNFIMKVLA.

To M.jannaschii MJ0803.

This is an uncharacterized protein from Methanocaldococcus jannaschii (strain ATCC 43067 / DSM 2661 / JAL-1 / JCM 10045 / NBRC 100440) (Methanococcus jannaschii).